We begin with the raw amino-acid sequence, 35 residues long: Cupiennin-1b (35 aa).

A Glutamic acid 1-amide modification is found at glutamate 35.

It belongs to the cationic peptide 04 (cupiennin) family. 01 subfamily. Expressed by the venom gland.

Its subcellular location is the secreted. Has antimicrobial activity against E.coli, E.faecalis, P.aeruginosa, and S.aureus. Has insecticidal and hemolytic activities. Probably acts by disturbing membrane function with its amphipathic structure. The polypeptide is Cupiennin-1b (Cupiennius salei (American wandering spider)).